The following is a 100-amino-acid chain: Large ribosomal subunit protein uL23 (100 aa).

Belongs to the universal ribosomal protein uL23 family. As to quaternary structure, part of the 50S ribosomal subunit. Contacts protein L29, and trigger factor when it is bound to the ribosome.

Functionally, one of the early assembly proteins it binds 23S rRNA. One of the proteins that surrounds the polypeptide exit tunnel on the outside of the ribosome. Forms the main docking site for trigger factor binding to the ribosome. In Shewanella denitrificans (strain OS217 / ATCC BAA-1090 / DSM 15013), this protein is Large ribosomal subunit protein uL23.